The sequence spans 154 residues: CASP-like protein 5B2 (154 aa).

The Cytoplasmic portion of the chain corresponds to 1–17; it reads MAGLAGRPGSWGGLVLR. Residues 18-38 traverse the membrane as a helical segment; it reads VGQALFAAACIGVMGSSLGFA. Topologically, residues 39 to 42 are extracellular; sequence SYTA. A helical transmembrane segment spans residues 43 to 63; that stretch reads FCYLIASMGLQMLWSFGLACL. Topologically, residues 64 to 87 are cytoplasmic; the sequence is DGYAIRANKDLTSPILLSLFVVGD. Residues 88–107 form a helical membrane-spanning segment; it reads WVTAILSFAASSSAAGVVIL. At 108–130 the chain is on the extracellular side; that stretch reads FQKDVLFCRRYPQLPCGKYELAT. Residues 131–151 traverse the membrane as a helical segment; it reads AFAFLSWALSATSALIMFWLL. The Cytoplasmic portion of the chain corresponds to 152–154; it reads AAF.

This sequence belongs to the Casparian strip membrane proteins (CASP) family. In terms of assembly, homodimer and heterodimers.

The protein localises to the cell membrane. This is CASP-like protein 5B2 from Zea mays (Maize).